We begin with the raw amino-acid sequence, 101 residues long: Small ribosomal subunit protein uS14 (101 aa).

It belongs to the universal ribosomal protein uS14 family. Part of the 30S ribosomal subunit. Contacts proteins S3 and S10.

Functionally, binds 16S rRNA, required for the assembly of 30S particles and may also be responsible for determining the conformation of the 16S rRNA at the A site. This Psychromonas ingrahamii (strain DSM 17664 / CCUG 51855 / 37) protein is Small ribosomal subunit protein uS14.